A 232-amino-acid chain; its full sequence is Phosphoribosylformylglycinamidine synthase subunit PurQ (232 aa).

The Glutamine amidotransferase type-1 domain occupies 2-232 (KIAIIQFGGT…SMADYITENF (231 aa)). Residue C86 is the Nucleophile of the active site. Residues H203 and E205 contribute to the active site.

As to quaternary structure, part of the FGAM synthase complex composed of 1 PurL, 1 PurQ and 2 PurS subunits.

Its subcellular location is the cytoplasm. The catalysed reaction is N(2)-formyl-N(1)-(5-phospho-beta-D-ribosyl)glycinamide + L-glutamine + ATP + H2O = 2-formamido-N(1)-(5-O-phospho-beta-D-ribosyl)acetamidine + L-glutamate + ADP + phosphate + H(+). It catalyses the reaction L-glutamine + H2O = L-glutamate + NH4(+). Its pathway is purine metabolism; IMP biosynthesis via de novo pathway; 5-amino-1-(5-phospho-D-ribosyl)imidazole from N(2)-formyl-N(1)-(5-phospho-D-ribosyl)glycinamide: step 1/2. In terms of biological role, part of the phosphoribosylformylglycinamidine synthase complex involved in the purines biosynthetic pathway. Catalyzes the ATP-dependent conversion of formylglycinamide ribonucleotide (FGAR) and glutamine to yield formylglycinamidine ribonucleotide (FGAM) and glutamate. The FGAM synthase complex is composed of three subunits. PurQ produces an ammonia molecule by converting glutamine to glutamate. PurL transfers the ammonia molecule to FGAR to form FGAM in an ATP-dependent manner. PurS interacts with PurQ and PurL and is thought to assist in the transfer of the ammonia molecule from PurQ to PurL. This chain is Phosphoribosylformylglycinamidine synthase subunit PurQ, found in Methanosarcina mazei (strain ATCC BAA-159 / DSM 3647 / Goe1 / Go1 / JCM 11833 / OCM 88) (Methanosarcina frisia).